A 424-amino-acid polypeptide reads, in one-letter code: tRNA (guanine-N(7)-)-methyltransferase non-catalytic subunit wuho (424 aa).

Residues 42-92 form a disordered region; that stretch reads LKGHTSQSQESCTAAAAASTATAASGQAPGGKEQQLANQPEEGGTSASASG. Over residues 46–68 the composition is skewed to low complexity; it reads TSQSQESCTAAAAASTATAASGQ. WD repeat units lie at residues 96 to 137, 184 to 223, 227 to 265, and 324 to 364; these read ATST…ARLL, GHLS…DIHS, GHRE…ELLQ, and AGSW…PASS.

It belongs to the WD repeat TRM82 family. As to quaternary structure, forms a heterodimer with the catalytic subunit Mettl1. Interacts with mei-P26 and weakly interacts with bgcn; required for the function or formation of the mei-P26-bgcn-bam-sxl complex. Interacts with nanos; may be involved in mei-P26-dependent derepression of the BMP signaling pathway. Interacts with Myc; the interaction may be mediated by mei-P26 and may be involved in the regulation of ribosome biogenesis. In testis, it is present at high level in hub cells, a niche for germline stem cells of testis. Ubiquitously expressed in all testicular cells throughout spermatogenesis. Ubiquitously expressed in all germline and somatic cells of the ovary.

Its subcellular location is the nucleus. The protein localises to the cytoplasm. The protein operates within tRNA modification; N(7)-methylguanine-tRNA biosynthesis. Its function is as follows. Required for the Mettl1-dependent formation of N(7)-methylguanine at position 46 (m7G46) in tRNA. In the Mettl1-wuho methyltransferase complex, it is required to stabilize and induce conformational changes of the catalytic subunit. Required for binding of nanos mRNA and repression of translation by the mei-P26-bgcn-bam-sxl complex. May cooperate with mei-P26 and nanos to derepress the BMP signaling pathway. May cooperate with mei-P26 to suppress expression of a subset of microRNAs. May cooperate with mei-P26 to regulate bam expression levels in germline cells during gametogenesis. Required to promote mitosis to meiosis transition during gametogenesis. May regulate germline cell division in part by regulating ribosome biogenesis. In Drosophila melanogaster (Fruit fly), this protein is tRNA (guanine-N(7)-)-methyltransferase non-catalytic subunit wuho.